The primary structure comprises 371 residues: GPI mannosyltransferase 1 (371 aa).

Transmembrane regions (helical) follow at residues 64–84, 120–140, 144–164, 190–210, 248–268, 290–310, 318–338, and 344–364; these read FPSW…WLMI, AILG…SVWL, ILGF…AFLV, IVVG…YLYG, ASSL…PLVF, VCTS…LPNS, LICL…AYNL, and SVFI…VYEL.

This sequence belongs to the PIGM family.

The protein localises to the endoplasmic reticulum membrane. It participates in glycolipid biosynthesis; glycosylphosphatidylinositol-anchor biosynthesis. Mannosyltransferase involved in glycosylphosphatidylinositol-anchor biosynthesis. Transfers the first alpha-1,4-mannose to GlcN-acyl-PI during GPI precursor assembly. Required for cell wall integrity. This is GPI mannosyltransferase 1 (gpi14) from Schizosaccharomyces pombe (strain 972 / ATCC 24843) (Fission yeast).